A 345-amino-acid polypeptide reads, in one-letter code: Acetylserotonin O-methyltransferase (345 aa).

S-adenosyl-L-methionine-binding positions include Tyr147, Trp164, Asp210, Gly235–Phe237, and Arg252. His255 serves as the catalytic Proton donor/acceptor. Substrate contacts are provided by Asp256, Asn302, and Gln306.

Belongs to the class I-like SAM-binding methyltransferase superfamily. Cation-independent O-methyltransferase family. Homodimer. Expressed in the pineal gland (at protein level). Not detectable in retina, nor in liver.

The catalysed reaction is N-acetylserotonin + S-adenosyl-L-methionine = melatonin + S-adenosyl-L-homocysteine + H(+). It participates in aromatic compound metabolism; melatonin biosynthesis; melatonin from serotonin: step 1/2. In terms of biological role, catalyzes the transfer of a methyl group onto N-acetylserotonin, producing melatonin (N-acetyl-5-methoxytryptamine). This Bos taurus (Bovine) protein is Acetylserotonin O-methyltransferase (ASMT).